Reading from the N-terminus, the 143-residue chain is Flagellar assembly factor FliW (143 aa).

It belongs to the FliW family. Interacts with translational regulator CsrA and flagellin(s).

It localises to the cytoplasm. Its function is as follows. Acts as an anti-CsrA protein, binds CsrA and prevents it from repressing translation of its target genes, one of which is flagellin. Binds to flagellin and participates in the assembly of the flagellum. The protein is Flagellar assembly factor FliW of Clostridium botulinum (strain Okra / Type B1).